The primary structure comprises 255 residues: Imidazole glycerol phosphate synthase subunit HisF (255 aa).

Residues Asp11 and Asp130 contribute to the active site.

Belongs to the HisA/HisF family. In terms of assembly, heterodimer of HisH and HisF.

It is found in the cytoplasm. The catalysed reaction is 5-[(5-phospho-1-deoxy-D-ribulos-1-ylimino)methylamino]-1-(5-phospho-beta-D-ribosyl)imidazole-4-carboxamide + L-glutamine = D-erythro-1-(imidazol-4-yl)glycerol 3-phosphate + 5-amino-1-(5-phospho-beta-D-ribosyl)imidazole-4-carboxamide + L-glutamate + H(+). The protein operates within amino-acid biosynthesis; L-histidine biosynthesis; L-histidine from 5-phospho-alpha-D-ribose 1-diphosphate: step 5/9. Its function is as follows. IGPS catalyzes the conversion of PRFAR and glutamine to IGP, AICAR and glutamate. The HisF subunit catalyzes the cyclization activity that produces IGP and AICAR from PRFAR using the ammonia provided by the HisH subunit. This chain is Imidazole glycerol phosphate synthase subunit HisF, found in Synechococcus sp. (strain ATCC 27144 / PCC 6301 / SAUG 1402/1) (Anacystis nidulans).